We begin with the raw amino-acid sequence, 121 residues long: Large ribosomal subunit protein bL20 (121 aa).

It belongs to the bacterial ribosomal protein bL20 family.

Functionally, binds directly to 23S ribosomal RNA and is necessary for the in vitro assembly process of the 50S ribosomal subunit. It is not involved in the protein synthesizing functions of that subunit. This is Large ribosomal subunit protein bL20 from Ruegeria sp. (strain TM1040) (Silicibacter sp.).